The sequence spans 209 residues: Small ribosomal subunit protein uS4 (209 aa).

Residues Cys-9, Cys-12, Cys-26, and Cys-31 each contribute to the Zn(2+) site. The C4-type zinc-finger motif lies at 9–31 (CRLCRREGVKLYLKGERCYSPKC). The S4 RNA-binding domain maps to 100-162 (RLDNVVYRLG…RNLELIRQNL (63 aa)).

It belongs to the universal ribosomal protein uS4 family. Part of the 30S ribosomal subunit. Contacts protein S5. The interaction surface between S4 and S5 is involved in control of translational fidelity. It depends on Zn(2+) as a cofactor.

Its function is as follows. One of the primary rRNA binding proteins, it binds directly to 16S rRNA where it helps nucleate assembly of the body and platform of the 30S subunit. The chain is Small ribosomal subunit protein uS4 (rpsD) from Thermus thermophilus (strain ATCC BAA-163 / DSM 7039 / HB27).